The following is a 507-amino-acid chain: ATP synthase subunit alpha, chloroplastic (507 aa).

170 to 177 (GDRQTGKT) contacts ATP.

This sequence belongs to the ATPase alpha/beta chains family. As to quaternary structure, F-type ATPases have 2 components, CF(1) - the catalytic core - and CF(0) - the membrane proton channel. CF(1) has five subunits: alpha(3), beta(3), gamma(1), delta(1), epsilon(1). CF(0) has four main subunits: a, b, b' and c.

The protein resides in the plastid. It is found in the chloroplast thylakoid membrane. It carries out the reaction ATP + H2O + 4 H(+)(in) = ADP + phosphate + 5 H(+)(out). Functionally, produces ATP from ADP in the presence of a proton gradient across the membrane. The alpha chain is a regulatory subunit. The polypeptide is ATP synthase subunit alpha, chloroplastic (Illicium oligandrum (Star anise)).